The chain runs to 379 residues: Inositol 3-kinase (379 aa).

ATP is bound by residues Ser-217, 267–270 (GAGD), and Asn-294. Asp-270 functions as the Proton acceptor in the catalytic mechanism.

The protein belongs to the carbohydrate kinase pfkB family.

It carries out the reaction myo-inositol + ATP = 1D-myo-inositol 3-phosphate + ADP + H(+). In terms of biological role, kinase that phosphorylates myo-inositol to produce multiple myo-inositol monophosphates, Ins(1)P, Ins(3)P, Ins(4)P, Ins(5)P and Ins(6)P. Participates in phytic acid biosynthesis in developing seeds. Phytic acid is the primary storage form of phosphorus in cereal grains and other plant seeds. In Zea mays (Maize), this protein is Inositol 3-kinase.